Consider the following 416-residue polypeptide: Leu/Ile/Val-binding protein homolog 4 (416 aa).

Positions 1 to 26 (MSLKVFLQAGVACAALSLAGAAGASA) are cleaved as a signal peptide.

This sequence belongs to the leucine-binding protein family.

Functionally, component of an amino-acid transport system. The chain is Leu/Ile/Val-binding protein homolog 4 from Brucella abortus (strain 2308).